Consider the following 509-residue polypeptide: MSRYLHTLLKAIDLQVRSGLANPEIKNLSTDSREIEKGDLFLGLDGEKVDGGTFWAKAIERGACAAIISKKASLLNPPTNEDPVVILPEPVSLFMGKLAADFWGKPSSEICLIGITGTNGKTTTSFLIEFLTTSLGHPSALFGTLINRWPNYEETSKYTTTFAVPLQAKLRKAVQAGVEYGAMEVSSHALSQNRVAGCDFNGAIFTNLSRDHLDYHDSMESYFEAKASLFRSHLIDDDGPRSVINIDDKWGSILAKELNKKCWTCSLKENSQIREKPDLYISNLQIMQDGYMGKLHTPFGVGNFISPLIGEFNLMNMLQAIGILVQRGLPLNDLLEALNKFPGVPGRMQLINMDGFKVKDGYPLVIVDYAHTPDGLQNALIASRSLTKKRLICVFGCGGDRDKGKRSKMGEVAAKFADYIVVTSDNPRQEDPIEIIKDIQKGITIDSEISVEPERSIAIQFAIAKAKKNDVVLIAGKGHEDYQILKDQTIYFDDREQARKALSLRTDVI.

A UDP-N-acetyl-alpha-D-muramoyl-L-alanyl-D-glutamate-binding site is contributed by Ser32. Position 117–123 (Gly117–Thr123) interacts with ATP. UDP-N-acetyl-alpha-D-muramoyl-L-alanyl-D-glutamate is bound by residues Thr159–Thr160, Ser186, Gln192, and Arg194. Position 226 is an N6-carboxylysine (Lys226). Residues Arg401, Asp425–Arg428, Gly476, and Glu480 contribute to the meso-2,6-diaminopimelate site. Positions Asp425–Arg428 match the Meso-diaminopimelate recognition motif motif.

This sequence belongs to the MurCDEF family. MurE subfamily. Requires Mg(2+) as cofactor. Post-translationally, carboxylation is probably crucial for Mg(2+) binding and, consequently, for the gamma-phosphate positioning of ATP.

Its subcellular location is the cytoplasm. The catalysed reaction is UDP-N-acetyl-alpha-D-muramoyl-L-alanyl-D-glutamate + meso-2,6-diaminopimelate + ATP = UDP-N-acetyl-alpha-D-muramoyl-L-alanyl-gamma-D-glutamyl-meso-2,6-diaminopimelate + ADP + phosphate + H(+). It participates in cell wall biogenesis; peptidoglycan biosynthesis. Its function is as follows. Catalyzes the addition of meso-diaminopimelic acid to the nucleotide precursor UDP-N-acetylmuramoyl-L-alanyl-D-glutamate (UMAG) in the biosynthesis of bacterial cell-wall peptidoglycan. The sequence is that of UDP-N-acetylmuramoyl-L-alanyl-D-glutamate--2,6-diaminopimelate ligase from Prochlorococcus marinus (strain NATL1A).